A 786-amino-acid polypeptide reads, in one-letter code: Signal transducer and activator of transcription 5B (786 aa).

The residue at position 90 (Tyr-90) is a Phosphotyrosine. Ser-128 bears the Phosphoserine mark. Positions 589–686 (WNDGAILGFV…EVYSKYYTPV (98 aa)) constitute an SH2 domain. Tyr-682 and Tyr-699 each carry phosphotyrosine.

Belongs to the transcription factor STAT family. As to quaternary structure, upon activation, forms a homodimer or a heterodimer with a related family member. Binds NR3C1. Interacts with NCOA1. Interacts with SOCS7. Interacts (via SH2 domain) with INSR. Interacts with CPEB3; this inhibits STAT5B-mediated transcriptional activation. Tyrosine phosphorylated in response to signaling via activated KIT, resulting in translocation to the nucleus. Tyrosine phosphorylated in response to signaling via activated FLT3; wild-type FLT3 results in much weaker phosphorylation than constitutively activated mutant FLT3. Alternatively, can be phosphorylated by JAK2. Phosphorylation at Tyr-699 by PTK6 or HCK leads to an increase of its transcriptional activity. In terms of tissue distribution, in the virgin, found in most tissues. Particularly abundant in muscle tissue of virgin and lactating females, and of males.

It localises to the cytoplasm. The protein resides in the nucleus. Carries out a dual function: signal transduction and activation of transcription. Mediates cellular responses to the cytokine KITLG/SCF and other growth factors. Binds to the GAS element and activates PRL-induced transcription. Positively regulates hematopoietic/erythroid differentiation. This Mus musculus (Mouse) protein is Signal transducer and activator of transcription 5B (Stat5b).